Consider the following 374-residue polypeptide: MNNLIKAYAAGVMSAAFLFGSEGRVRSESDRVRGEDPWHLLQWAQVVYEREEFGDTLRYAQRARALRREQVEHQCRVLLRARTRAESAGIPETLSDLYALLKSRGETDACEVLDAIFLTHAPHVFQNSVSKLLQWLKDSAAFPEAELLLGKVFEGEGEYAQALQHYRNAWDTRAQLVVPDARFDIIYAMANVSRLLSQQDEREKYLLLVLSEDPLYSAREVWGKTLHAMLRTIRSSNTVEKFFKLYRHRNVLALRAYQELTEMYVRTDNIERALPVSVLAADIAISALDSFLQKIELTYQYKDLADLFLRTGSHPTILKWANEHGVWQTLLHFADLLYKKGLHAQARDMYYNLAEKCPAFEYARRAAYKLSLTL.

An N-terminal signal peptide occupies residues 1-26 (MNNLIKAYAAGVMSAAFLFGSEGRVR).

This is an uncharacterized protein from Treponema pallidum (strain Nichols).